The following is a 130-amino-acid chain: Small ribosomal subunit protein eS17 (130 aa).

Belongs to the eukaryotic ribosomal protein eS17 family.

This Theileria parva (East coast fever infection agent) protein is Small ribosomal subunit protein eS17 (RPS17).